Consider the following 193-residue polypeptide: Potassium-transporting ATPase KdpC subunit (193 aa).

The helical transmembrane segment at 14-34 (ITFTFLVLCGLVYPLIVTGIA) threads the bilayer.

It belongs to the KdpC family. In terms of assembly, the system is composed of three essential subunits: KdpA, KdpB and KdpC.

It is found in the cell membrane. Part of the high-affinity ATP-driven potassium transport (or Kdp) system, which catalyzes the hydrolysis of ATP coupled with the electrogenic transport of potassium into the cytoplasm. This subunit acts as a catalytic chaperone that increases the ATP-binding affinity of the ATP-hydrolyzing subunit KdpB by the formation of a transient KdpB/KdpC/ATP ternary complex. The protein is Potassium-transporting ATPase KdpC subunit of Bacillus cereus (strain ATCC 14579 / DSM 31 / CCUG 7414 / JCM 2152 / NBRC 15305 / NCIMB 9373 / NCTC 2599 / NRRL B-3711).